The chain runs to 320 residues: Cytochrome f (320 aa).

The first 35 residues, 1–35 (MQTRNAFSWLKKQITRSISVSLMIYILTRTSISSA), serve as a signal peptide directing secretion. Heme-binding residues include Tyr36, Cys56, Cys59, and His60. A helical transmembrane segment spans residues 286-306 (VQGLLFFLASVILAQIFLVLK).

Belongs to the cytochrome f family. In terms of assembly, the 4 large subunits of the cytochrome b6-f complex are cytochrome b6, subunit IV (17 kDa polypeptide, petD), cytochrome f and the Rieske protein, while the 4 small subunits are PetG, PetL, PetM and PetN. The complex functions as a dimer. The cofactor is heme.

It is found in the plastid. It localises to the chloroplast thylakoid membrane. Component of the cytochrome b6-f complex, which mediates electron transfer between photosystem II (PSII) and photosystem I (PSI), cyclic electron flow around PSI, and state transitions. This chain is Cytochrome f, found in Nicotiana sylvestris (Wood tobacco).